A 334-amino-acid polypeptide reads, in one-letter code: F-box only protein 16 (334 aa).

An F-box domain is found at 86-132 (LDFTTKLPRVLSVYIFSFLDPRSLCRCAQVSWYWKSLAELDQLWMLK). 2 disordered regions span residues 168-222 (PKTP…WRSS) and 314-334 (LEHL…QSQS). Positions 194 to 204 (SPSLAFRSSSS) are enriched in low complexity. Basic and acidic residues predominate over residues 210–222 (NPGEKELPPWRSS). Low complexity predominate over residues 323–334 (LQSPSPRLQSQS).

In terms of assembly, part of a SCF (SKP1-cullin-F-box) protein ligase complex.

Probably recognizes and binds to some phosphorylated proteins and promotes their ubiquitination and degradation. In Mus musculus (Mouse), this protein is F-box only protein 16 (Fbxo16).